The primary structure comprises 245 residues: tRNA pseudouridine synthase A (245 aa).

Aspartate 52 (nucleophile) is an active-site residue. Residue tyrosine 111 participates in substrate binding.

It belongs to the tRNA pseudouridine synthase TruA family. As to quaternary structure, homodimer.

The catalysed reaction is uridine(38/39/40) in tRNA = pseudouridine(38/39/40) in tRNA. Its function is as follows. Formation of pseudouridine at positions 38, 39 and 40 in the anticodon stem and loop of transfer RNAs. The chain is tRNA pseudouridine synthase A from Rickettsia canadensis (strain McKiel).